Here is a 361-residue protein sequence, read N- to C-terminus: Queuine tRNA-ribosyltransferase (361 aa).

Catalysis depends on D92, which acts as the Proton acceptor. Residues 92-96 (DSGGF), D146, Q189, and G216 each bind substrate. The RNA binding stretch occupies residues 247–253 (GVGKPSD). Catalysis depends on D266, which acts as the Nucleophile. The tract at residues 271–275 (TRSGR) is RNA binding; important for wobble base 34 recognition. Zn(2+) contacts are provided by C304, C306, C309, and H335.

The protein belongs to the queuine tRNA-ribosyltransferase family. As to quaternary structure, homodimer. Within each dimer, one monomer is responsible for RNA recognition and catalysis, while the other monomer binds to the replacement base PreQ1. Requires Zn(2+) as cofactor.

The enzyme catalyses 7-aminomethyl-7-carbaguanine + guanosine(34) in tRNA = 7-aminomethyl-7-carbaguanosine(34) in tRNA + guanine. The protein operates within tRNA modification; tRNA-queuosine biosynthesis. Its function is as follows. Catalyzes the base-exchange of a guanine (G) residue with the queuine precursor 7-aminomethyl-7-deazaguanine (PreQ1) at position 34 (anticodon wobble position) in tRNAs with GU(N) anticodons (tRNA-Asp, -Asn, -His and -Tyr). Catalysis occurs through a double-displacement mechanism. The nucleophile active site attacks the C1' of nucleotide 34 to detach the guanine base from the RNA, forming a covalent enzyme-RNA intermediate. The proton acceptor active site deprotonates the incoming PreQ1, allowing a nucleophilic attack on the C1' of the ribose to form the product. After dissociation, two additional enzymatic reactions on the tRNA convert PreQ1 to queuine (Q), resulting in the hypermodified nucleoside queuosine (7-(((4,5-cis-dihydroxy-2-cyclopenten-1-yl)amino)methyl)-7-deazaguanosine). The sequence is that of Queuine tRNA-ribosyltransferase from Rickettsia prowazekii (strain Madrid E).